Consider the following 44-residue polypeptide: Cytochrome b559 subunit beta (44 aa).

A helical transmembrane segment spans residues 19-35 (WLAIHGIAVPTIFFLGA). H23 contributes to the heme binding site.

This sequence belongs to the PsbE/PsbF family. In terms of assembly, heterodimer of an alpha subunit and a beta subunit. PSII is composed of 1 copy each of membrane proteins PsbA, PsbB, PsbC, PsbD, PsbE, PsbF, PsbH, PsbI, PsbJ, PsbK, PsbL, PsbM, PsbT, PsbX, PsbY, PsbZ, Psb30/Ycf12, at least 3 peripheral proteins of the oxygen-evolving complex and a large number of cofactors. It forms dimeric complexes. Heme b is required as a cofactor.

The protein localises to the plastid. The protein resides in the chloroplast thylakoid membrane. Functionally, this b-type cytochrome is tightly associated with the reaction center of photosystem II (PSII). PSII is a light-driven water:plastoquinone oxidoreductase that uses light energy to abstract electrons from H(2)O, generating O(2) and a proton gradient subsequently used for ATP formation. It consists of a core antenna complex that captures photons, and an electron transfer chain that converts photonic excitation into a charge separation. The protein is Cytochrome b559 subunit beta of Chlamydomonas reinhardtii (Chlamydomonas smithii).